Consider the following 244-residue polypeptide: Cysteine-rich secretory protein 2 (244 aa).

The N-terminal stretch at 1 to 21 (MALLPVVVFLITMLLPCVLTN) is a signal peptide. The SCP domain maps to 43-170 (NKHNQLRKSV…SLKYYYVCQY (128 aa)). 5 disulfides stabilise this stretch: Cys-190-Cys-197, Cys-193-Cys-202, Cys-206-Cys-239, Cys-215-Cys-233, and Cys-224-Cys-237. The ShKT domain occupies 206–239 (CEYEDLLSNCESLKNTAGCEHQLLVEKCKATCRC).

This sequence belongs to the CRISP family. Interacts with NSUN4 isoform 3. In terms of tissue distribution, testis.

The protein resides in the secreted. In terms of biological role, may regulate some ion channels' activity and thereby regulate calcium fluxes during sperm capacitation. The protein is Cysteine-rich secretory protein 2 (CRISP2) of Cavia porcellus (Guinea pig).